The sequence spans 320 residues: L-lactate dehydrogenase (320 aa).

Residues Val-18, Asp-39, Arg-44, Tyr-69, and 83–84 contribute to the NAD(+) site; that span reads GA. The substrate site is built by Gln-86 and Arg-92. Residues Ser-105, 122 to 124, and Ser-147 contribute to the NAD(+) site; that span reads AAN. Substrate is bound at residue 124–127; sequence NPVD. Substrate is bound at residue 152 to 155; it reads DSSR. The active-site Proton acceptor is His-179. Phosphotyrosine is present on Tyr-223. Position 232 (Thr-232) interacts with substrate.

This sequence belongs to the LDH/MDH superfamily. LDH family. In terms of assembly, homotetramer.

It is found in the cytoplasm. It catalyses the reaction (S)-lactate + NAD(+) = pyruvate + NADH + H(+). Its pathway is fermentation; pyruvate fermentation to lactate; (S)-lactate from pyruvate: step 1/1. Its activity is regulated as follows. The quaternary structure is constitutionally similar to the active conformation of allosteric LDHs, and the regulation is independent of the fructose 1,6-bisphosphate-binding site. Catalyzes the conversion of lactate to pyruvate. This chain is L-lactate dehydrogenase, found in Lactiplantibacillus pentosus (Lactobacillus pentosus).